A 188-amino-acid chain; its full sequence is Mitochondrial import receptor subunit TOM20 homolog (188 aa).

Topologically, residues 1–12 are mitochondrial intermembrane; the sequence is MSDTILGFNKSN. Residues 13 to 31 traverse the membrane as a helical segment; the sequence is VVLAAGIAGAAFLGYCIYF. Residues 32 to 188 are Cytoplasmic-facing; that stretch reads DHKRINAPDY…ELIDDTDDLE (157 aa). 2 disordered regions span residues 42-73 and 156-188; these read KDKI…AAPD and DEAE…DDLE. A compositionally biased stretch (low complexity) spans 58–67; it reads MAPRRPAAAG.

The protein belongs to the Tom20 family. Forms part of the preprotein translocase complex of the outer mitochondrial membrane (TOM complex).

The protein resides in the mitochondrion outer membrane. Its function is as follows. Central component of the receptor complex responsible for the recognition and translocation of cytosolically synthesized mitochondrial preproteins. Together with tomm-22 functions as the transit peptide receptor at the surface of the mitochondrion outer membrane and facilitates the movement of preproteins into the translocation pore. The polypeptide is Mitochondrial import receptor subunit TOM20 homolog (Caenorhabditis elegans).